We begin with the raw amino-acid sequence, 496 residues long: Glycerol kinase (496 aa).

T12 serves as a coordination point for ADP. ATP-binding residues include T12, T13, and S14. T12 contributes to the sn-glycerol 3-phosphate binding site. R16 serves as a coordination point for ADP. The sn-glycerol 3-phosphate site is built by R82, E83, and Y134. Glycerol contacts are provided by R82, E83, and Y134. H230 bears the Phosphohistidine; by HPr mark. Residue D244 participates in sn-glycerol 3-phosphate binding. Residues D244 and Q245 each coordinate glycerol. The ADP site is built by T266 and G309. ATP is bound by residues T266, G309, Q313, and G410. 2 residues coordinate ADP: G410 and N414.

It belongs to the FGGY kinase family. As to quaternary structure, homotetramer and homodimer (in equilibrium). The phosphoenolpyruvate-dependent sugar phosphotransferase system (PTS), including enzyme I, and histidine-containing protein (HPr) are required for the phosphorylation, which leads to the activation of the enzyme.

It catalyses the reaction glycerol + ATP = sn-glycerol 3-phosphate + ADP + H(+). It participates in polyol metabolism; glycerol degradation via glycerol kinase pathway; sn-glycerol 3-phosphate from glycerol: step 1/1. Its activity is regulated as follows. Activated by phosphorylation and inhibited by fructose 1,6-bisphosphate (FBP). Key enzyme in the regulation of glycerol uptake and metabolism. Catalyzes the phosphorylation of glycerol to yield sn-glycerol 3-phosphate. This chain is Glycerol kinase, found in Bacillus cereus (strain ATCC 14579 / DSM 31 / CCUG 7414 / JCM 2152 / NBRC 15305 / NCIMB 9373 / NCTC 2599 / NRRL B-3711).